The following is a 275-amino-acid chain: Autophagy protein 5 (275 aa).

An N-acetylmethionine modification is found at Met-1. A Glycyl lysine isopeptide (Lys-Gly) (interchain with G-Cter in ATG12) cross-link involves residue Lys-130.

Belongs to the ATG5 family. As to quaternary structure, forms a conjugate with ATG12. Part of the minor complex composed of 4 sets of ATG12-ATG5 and ATG16L1 (400 kDa); this complex interacts with ATG3 leading to disruption of ATG7 interaction and promotion of ATG8-like proteins lipidation. Forms an 800-kDa complex composed of ATG12-ATG5 and ATG16L2. The ATG12-ATG5 conjugate interacts with RAB33A; this interaction is bridged by ATG16L1 and promotes ATG12-ATG5-ATG16L1 complex recruitment to phagophores. Interacts with TECPR1; the interaction is direct and does not take place when ATG16L1 is associated with the ATG5-ATG12 conjugate. Interacts with DHX58/RIG-1, IFIH1/MDA5 and MAVS/IPS-1 in monomeric form as well as in ATG12-ATG5 conjugate form. The interaction with MAVS is further enhanced upon vesicular stomatitis virus (VSV) infection. Interacts with ATG3. Interacts with ATG7 and ATG10. Interacts with FADD. Interacts with Bassoon/BSN; this interaction is important for the regulation of presynaptic autophagy. Interacts with ATG16L2. Post-translationally, conjugated to ATG12; which is essential for autophagy, but is not required for association with isolation membrane. Acetylated by EP300.

It localises to the cytoplasm. The protein localises to the preautophagosomal structure membrane. In terms of biological role, involved in autophagic vesicle formation. Conjugation with ATG12, through a ubiquitin-like conjugating system involving ATG7 as an E1-like activating enzyme and ATG10 as an E2-like conjugating enzyme, is essential for its function. The ATG12-ATG5 conjugate acts as an E3-like enzyme which is required for lipidation of ATG8 family proteins and their association to the vesicle membranes. Involved in mitochondrial quality control after oxidative damage, and in subsequent cellular longevity. Plays a critical role in multiple aspects of lymphocyte development and is essential for both B and T lymphocyte survival and proliferation. Required for optimal processing and presentation of antigens for MHC II. Involved in the maintenance of axon morphology and membrane structures, as well as in normal adipocyte differentiation. Promotes primary ciliogenesis through removal of OFD1 from centriolar satellites and degradation of IFT20 via the autophagic pathway. As part of the ATG8 conjugation system with ATG12 and ATG16L1, required for recruitment of LRRK2 to stressed lysosomes and induction of LRRK2 kinase activity in response to lysosomal stress. Functionally, may play an important role in the apoptotic process, possibly within the modified cytoskeleton. Its expression is a relatively late event in the apoptotic process, occurring downstream of caspase activity. Plays a crucial role in IFN-gamma-induced autophagic cell death by interacting with FADD. The polypeptide is Autophagy protein 5 (Pongo abelii (Sumatran orangutan)).